The chain runs to 449 residues: Elongation factor 1-alpha 1 (449 aa).

The tr-type G domain occupies 5-230 (KFHINIVVIG…DQINEPKRPS (226 aa)). Positions 14 to 21 (GHVDSGKS) are G1. 14-21 (GHVDSGKS) contributes to the GTP binding site. Lys-55 carries the N6,N6-dimethyllysine modification. The segment at 70-74 (GITID) is G2. Lys-79 bears the N6,N6,N6-trimethyllysine mark. The segment at 91–94 (DAPG) is G3. GTP contacts are provided by residues 91 to 95 (DAPGH) and 153 to 156 (NKMD). The G4 stretch occupies residues 153–156 (NKMD). Lys-187 is subject to N6,N6,N6-trimethyllysine. The tract at residues 194–196 (SGF) is G5. Lys-261 carries the post-translational modification N6-methyllysine. An N6,N6,N6-trimethyllysine mark is found at Lys-306 and Lys-396. Glycyl lysine isopeptide (Lys-Gly) (interchain with G-Cter in ubiquitin) cross-links involve residues Lys-438 and Lys-441.

It belongs to the TRAFAC class translation factor GTPase superfamily. Classic translation factor GTPase family. EF-Tu/EF-1A subfamily.

It is found in the cytoplasm. Its function is as follows. This protein promotes the GTP-dependent binding of aminoacyl-tRNA to the A-site of ribosomes during protein biosynthesis. This Arabidopsis thaliana (Mouse-ear cress) protein is Elongation factor 1-alpha 1 (A1).